The chain runs to 411 residues: Zinc finger protein draculin (411 aa).

Residues 1–33 are disordered; that stretch reads MKNTTKPCRTEHHNAEGQRDRMEGNKKGETKAK. Basic and acidic residues predominate over residues 8–32; it reads CRTEHHNAEGQRDRMEGNKKGETKA. 13 C2H2-type zinc fingers span residues 36 to 58, 64 to 86, 92 to 114, 120 to 142, 148 to 170, 176 to 198, 204 to 226, 232 to 254, 260 to 282, 288 to 310, 316 to 338, 344 to 366, and 372 to 394; these read VACSHCKKRFSHKAHLQIHMRVH, YRCDQCGKCFPYKQSLKLHLDIH, YTCDECGESFKTRLQLRSHMTLH, YKCDQCEKSYGREDHLQRHMKLH, HKCEHCGKSFPMRDLLRSHLMVH, YTCDQCGKGFTLKKSYNEHMNIH, YTCDQCGKGFPYEQSLNLHMRFH, FTCDQCGQSFSQKGAYNIHMKIH, YTCDQCGMSFRHGYSLKLHMTHH, FHCDQCDKCYSTALFLKNHIKTH, YSCLTCGKTFNQLRGLRLHEKRH, FMCFDCGKCYFTDTELKQHLPVH, and YMCSLCFKSFPRMGSLIVHEKTH.

Specifically expressed in the hematopoietic lineage during embryogenesis; first expressed at the late blastula stage around the blastoderm margin. During gastrulation, restricted to the ventral mesoderm, the presumptive prechordal plate and the dorso-marginal cells of the organizer. At the 3-somite stage, strongly expressed in a caudal domain (marking the erythroid lineage) and a cephalic domain of the lateral mesoderm. At the 8- to 10-somite stage, caudal expression is in two bands of lateral mesoderm which later converge at the midline. Anterior expression is also in two bands of lateral mesoderm which converge as two patches at the midline by the 15-somite stage, with increased scattering of single cells (macrophage precursors) away from the midline to the yolksac. Once at the yolksac, expression is lost. By 20-24 hours post-fertilization (hpf), expressed in proerythroblasts in the erythroid blood island centered above the uro-genital opening. Expression persists in circulating erythroblasts but is lost in mature erythrocytes.

This Danio rerio (Zebrafish) protein is Zinc finger protein draculin.